Consider the following 322-residue polypeptide: 3-alpha-hydroxysteroid dehydrogenase (322 aa).

Met1 bears the Blocked amino end (Met) mark. Residues 20–24 (GFGTT) and Asp50 each bind NADP(+). Tyr55 functions as the Proton donor in the catalytic mechanism. His117 provides a ligand contact to substrate. Residues 166 to 167 (SN), Gln190, and 216 to 221 (YCTLGS) each bind NADP(+). Trp227 serves as a coordination point for substrate. An NADP(+)-binding site is contributed by 270–280 (RSFNAKRIKEL).

This sequence belongs to the aldo/keto reductase family. In terms of assembly, monomer. As to expression, in brain, highest levels found in olfactory bulb. Moderate levels present in cerebellum, cerebral cortex, hypothalamus and pituitary. Low levels present in amygdala, brain stem, caudate putamen, cingulate cortex, hippocampus, midbrain, and thalamus.

Its subcellular location is the cytoplasm. The enzyme catalyses a 3alpha-hydroxysteroid + NADP(+) = a 3-oxosteroid + NADPH + H(+). It carries out the reaction a 3alpha-hydroxysteroid + NAD(+) = a 3-oxosteroid + NADH + H(+). Its activity is regulated as follows. Potently inhibited by the nonsteroidal anti-inflammatory drugs (NSAID). In terms of biological role, besides being a 3-alpha-hydroxysteroid dehydrogenase, the enzyme can accomplish diverse functions: as quinone reductase, as an aromatic alcohol dehydrogenase, as dihydrodiol dehydrogenase, and as 9-, 11-, and 15-hydroxyprostaglandin dehydrogenase. The protein is 3-alpha-hydroxysteroid dehydrogenase (Akr1c9) of Rattus norvegicus (Rat).